The chain runs to 248 residues: 4-hydroxy-tetrahydrodipicolinate reductase (248 aa).

NAD(+) contacts are provided by residues 74–76 (GTT) and 99–102 (SANF). His134 (proton donor/acceptor) is an active-site residue. Position 135 (His135) interacts with (S)-2,3,4,5-tetrahydrodipicolinate. Lys138 functions as the Proton donor in the catalytic mechanism. 144–145 (GT) is a (S)-2,3,4,5-tetrahydrodipicolinate binding site.

Belongs to the DapB family.

The protein resides in the cytoplasm. The enzyme catalyses (S)-2,3,4,5-tetrahydrodipicolinate + NAD(+) + H2O = (2S,4S)-4-hydroxy-2,3,4,5-tetrahydrodipicolinate + NADH + H(+). It carries out the reaction (S)-2,3,4,5-tetrahydrodipicolinate + NADP(+) + H2O = (2S,4S)-4-hydroxy-2,3,4,5-tetrahydrodipicolinate + NADPH + H(+). It functions in the pathway amino-acid biosynthesis; L-lysine biosynthesis via DAP pathway; (S)-tetrahydrodipicolinate from L-aspartate: step 4/4. In terms of biological role, catalyzes the conversion of 4-hydroxy-tetrahydrodipicolinate (HTPA) to tetrahydrodipicolinate. This Chlorobium phaeobacteroides (strain BS1) protein is 4-hydroxy-tetrahydrodipicolinate reductase.